Consider the following 339-residue polypeptide: UDP-glucose 4-epimerase (339 aa).

Residues 12–13 (FI), 32–37 (DNLCNS), 59–60 (DI), 81–85 (FAGLK), Asn-100, Ser-125, Tyr-150, Lys-154, and Phe-179 contribute to the NAD(+) site. Substrate contacts are provided by Ser-125 and Tyr-150. The active-site Proton acceptor is Tyr-150. Substrate contacts are provided by residues Asn-180, 200-201 (NL), 217-219 (AVF), Arg-232, and 293-296 (RAGD).

This sequence belongs to the NAD(P)-dependent epimerase/dehydratase family. Homodimer. Requires NAD(+) as cofactor.

The catalysed reaction is UDP-alpha-D-glucose = UDP-alpha-D-galactose. Its pathway is carbohydrate metabolism; galactose metabolism. Involved in the metabolism of galactose. Plays an essential role in the incorporation of galactose into meningococcal lipopolysaccharide surface molecules, which are important for pathogenesis. Catalyzes the conversion of UDP-galactose (UDP-Gal) to UDP-glucose (UDP-Glc) through a mechanism involving the transient reduction of NAD. This Neisseria meningitidis serogroup C protein is UDP-glucose 4-epimerase (galE).